The sequence spans 353 residues: GTPase Obg (353 aa).

In terms of domain architecture, Obg spans Met1 to Leu159. An OBG-type G domain is found at Ala160–Tyr333. GTP is bound by residues Gly166–Ser173, Phe191–Val195, Asp212–Gly215, Thr283–Asp286, and Ser314–Val316. Mg(2+) contacts are provided by Ser173 and Thr193.

It belongs to the TRAFAC class OBG-HflX-like GTPase superfamily. OBG GTPase family. As to quaternary structure, monomer. The cofactor is Mg(2+).

It is found in the cytoplasm. Functionally, an essential GTPase which binds GTP, GDP and possibly (p)ppGpp with moderate affinity, with high nucleotide exchange rates and a fairly low GTP hydrolysis rate. Plays a role in control of the cell cycle, stress response, ribosome biogenesis and in those bacteria that undergo differentiation, in morphogenesis control. This Anaeromyxobacter sp. (strain Fw109-5) protein is GTPase Obg.